Here is a 91-residue protein sequence, read N- to C-terminus: Large ribosomal subunit protein uL23c (91 aa).

The protein belongs to the universal ribosomal protein uL23 family. Part of the 50S ribosomal subunit.

The protein resides in the plastid. The protein localises to the chloroplast. Binds to 23S rRNA. The chain is Large ribosomal subunit protein uL23c (rpl23) from Physcomitrium patens (Spreading-leaved earth moss).